Here is a 373-residue protein sequence, read N- to C-terminus: Chaperone protein DnaJ (373 aa).

Residues 5-70 (DYYEVLGLQK…EKKSNYDQFG (66 aa)) enclose the J domain. The CR-type zinc-finger motif lies at 132 to 214 (GVEKEITVNR…CRGNGNVRKT (83 aa)). The Zn(2+) site is built by Cys145, Cys148, Cys162, Cys165, Cys188, Cys191, Cys202, and Cys205. CXXCXGXG motif repeat units lie at residues 145–152 (CEHCNGSG), 162–169 (CPTCSGTG), 188–195 (CDRCSGTG), and 202–209 (CTHCRGNG).

It belongs to the DnaJ family. Homodimer. It depends on Zn(2+) as a cofactor.

It is found in the cytoplasm. Its function is as follows. Participates actively in the response to hyperosmotic and heat shock by preventing the aggregation of stress-denatured proteins and by disaggregating proteins, also in an autonomous, DnaK-independent fashion. Unfolded proteins bind initially to DnaJ; upon interaction with the DnaJ-bound protein, DnaK hydrolyzes its bound ATP, resulting in the formation of a stable complex. GrpE releases ADP from DnaK; ATP binding to DnaK triggers the release of the substrate protein, thus completing the reaction cycle. Several rounds of ATP-dependent interactions between DnaJ, DnaK and GrpE are required for fully efficient folding. Also involved, together with DnaK and GrpE, in the DNA replication of plasmids through activation of initiation proteins. In Clostridium botulinum (strain Eklund 17B / Type B), this protein is Chaperone protein DnaJ.